We begin with the raw amino-acid sequence, 309 residues long: ASC1-like protein 1 (309 aa).

The next 6 membrane-spanning stretches (helical) occupy residues 27 to 47 (FFAL…LDCF), 84 to 104 (CVYF…EPWF), 130 to 150 (AVYM…MFWE), 156 to 176 (FGVS…SYVF), 215 to 235 (FLLF…FWIL), and 260 to 280 (YVFN…WVLI). Positions 75-289 (RKFKESAWKC…IYRMLVRQIK (215 aa)) constitute a TLC domain.

It localises to the endoplasmic reticulum membrane. Mediates resistance to sphinganine-analog mycotoxins (SAMs) by restoring the sphingolipid biosynthesis. Could salvage the transport of GPI-anchored proteins from the endoplasmic reticulum to the Golgi apparatus in ceramides-depleted cells after SAM exposure. In Oryza sativa subsp. japonica (Rice), this protein is ASC1-like protein 1.